The chain runs to 407 residues: MSRYHTFTAADAVEYARQFGQVADPQALVTADEIGDGNLNLVFKIRDTAGISRVIVKQALPYVRCVGESWPLMLDRARIEAETLLTHSQFCPQHTVKVLHHDAELAVMVQEDLSDHHIWRHELIQGNYYPQAAEQLGEYLAQTLFHTSDFYQSAQAKKAAVSRYTNPELCQITEDLFFTDPYIEHERNNFDPVLLPEVLSLRQDKALKLAVASLKHRFLSQAEALLHGDIHSGSIFVADGRLKTIDAEFGFYGPIGFDIGTALGNLLLNYCGLPGLAGPRDAAAGREQRLNDVQTVWQTFAARFLALSQEKAQDPALATEGYAAQFLQHVWRDAIGYCGSELIRRTIGLAHVADLDSIDDQEMRRACQRHALSLGRALILVAPHVDDVGGVVARIRQSPSSLTPQRC.

Residues asparagine 40, lysine 57, and 111-113 (EDL) contribute to the ATP site. Aspartate 229 is a substrate binding site. 246-248 (DAE) contacts ATP. Arginine 344 lines the substrate pocket.

It belongs to the methylthioribose kinase family. In terms of assembly, homodimer.

It carries out the reaction 5-(methylsulfanyl)-D-ribose + ATP = 5-(methylsulfanyl)-alpha-D-ribose 1-phosphate + ADP + H(+). Its pathway is amino-acid biosynthesis; L-methionine biosynthesis via salvage pathway; S-methyl-5-thio-alpha-D-ribose 1-phosphate from S-methyl-5'-thioadenosine (hydrolase route): step 2/2. In terms of biological role, catalyzes the phosphorylation of methylthioribose into methylthioribose-1-phosphate. The sequence is that of Methylthioribose kinase from Yersinia pestis bv. Antiqua (strain Angola).